Reading from the N-terminus, the 447-residue chain is Elongation factor 1-alpha (447 aa).

The tr-type G domain occupies 5–230 (KIHISIVVIG…DQINEPKRPS (226 aa)). A G1 region spans residues 14–21 (GHVDSGKS). Position 14–21 (14–21 (GHVDSGKS)) interacts with GTP. Position 55 is an N6,N6-dimethyllysine (lysine 55). The G2 stretch occupies residues 70–74 (GITID). An N6,N6,N6-trimethyllysine modification is found at lysine 79. The interval 91–94 (DAPG) is G3. Residues 91–95 (DAPGH) and 153–156 (NKMD) contribute to the GTP site. Residues 153–156 (NKMD) form a G4 region. Lysine 187 carries the post-translational modification N6,N6,N6-trimethyllysine. A G5 region spans residues 194–196 (SGF). The residue at position 261 (lysine 261) is an N6-methyllysine. Glutamate 289 is modified (5-glutamyl glycerylphosphorylethanolamine). Lysine 306 carries the N6,N6,N6-trimethyllysine modification. Position 362 is a 5-glutamyl glycerylphosphorylethanolamine (glutamate 362). The residue at position 396 (lysine 396) is an N6,N6,N6-trimethyllysine.

Belongs to the TRAFAC class translation factor GTPase superfamily. Classic translation factor GTPase family. EF-Tu/EF-1A subfamily.

The protein resides in the cytoplasm. This protein promotes the GTP-dependent binding of aminoacyl-tRNA to the A-site of ribosomes during protein biosynthesis. In Hordeum vulgare (Barley), this protein is Elongation factor 1-alpha (BLT63).